The following is a 219-amino-acid chain: Response regulator ArlR (219 aa).

The 114-residue stretch at 3–116 folds into the Response regulatory domain; it reads NILIVEDEQN…ELLARIRAVL (114 aa). At Asp52 the chain carries 4-aspartylphosphate. A DNA-binding region (ompR/PhoB-type) is located at residues 122 to 219; that stretch reads KDVLDINGII…TVRGVGYVIR (98 aa).

Post-translationally, phosphorylated by ArlS.

It localises to the cytoplasm. In terms of biological role, member of the two-component regulatory system ArlS/ArlR. This Staphylococcus epidermidis (strain ATCC 12228 / FDA PCI 1200) protein is Response regulator ArlR (arlR).